We begin with the raw amino-acid sequence, 254 residues long: Ribosomal protein L11 methyltransferase (254 aa).

Residues T107, G128, D149, S175, and N191 each coordinate S-adenosyl-L-methionine.

Belongs to the methyltransferase superfamily. PrmA family.

Its subcellular location is the cytoplasm. The enzyme catalyses L-lysyl-[protein] + 3 S-adenosyl-L-methionine = N(6),N(6),N(6)-trimethyl-L-lysyl-[protein] + 3 S-adenosyl-L-homocysteine + 3 H(+). It carries out the reaction an N-terminal L-alpha-aminoacyl-[protein] + 3 S-adenosyl-L-methionine = an N-terminal trimethyl-L-alpha-aminoacyl-[protein] + 3 S-adenosyl-L-homocysteine + 3 H(+). Functionally, methylates ribosomal protein L11. Preferentially recognizes free L11 before its incorporation into 50S subunits. This function is dispensable for growth and thermostability. The polypeptide is Ribosomal protein L11 methyltransferase (Thermus thermophilus (strain ATCC 27634 / DSM 579 / HB8)).